Here is a 142-residue protein sequence, read N- to C-terminus: Metallothiol transferase FosB (142 aa).

The VOC domain occupies asparagine 5–glycine 120. Mg(2+) is bound by residues histidine 8, histidine 67, and glutamate 116. Catalysis depends on glutamate 116, which acts as the Proton donor/acceptor.

It belongs to the fosfomycin resistance protein family. FosB subfamily. As to quaternary structure, homodimer. The cofactor is Mg(2+).

The protein resides in the cytoplasm. In terms of biological role, metallothiol transferase which confers resistance to fosfomycin by catalyzing the addition of a thiol cofactor to fosfomycin. L-cysteine is probably the physiological thiol donor. The polypeptide is Metallothiol transferase FosB (Staphylococcus epidermidis (strain ATCC 35984 / DSM 28319 / BCRC 17069 / CCUG 31568 / BM 3577 / RP62A)).